The following is a 168-amino-acid chain: Thiosulfate dehydrogenase [quinone] small subunit (168 aa).

A helical transmembrane segment spans residues 6–26 (IIGIIFAILVVGWILATGQWA).

As to quaternary structure, heterodimer of a large and a small subunit in a 2:2 stoichiometry. TQO may associate with the terminal oxidase formed by doxBCE. Post-translationally, the N-terminus is blocked. In terms of processing, glycosylated.

Its subcellular location is the cell membrane. It carries out the reaction 6-decylubiquinone + 2 thiosulfate = 6-decylubiquinol + tetrathionate. With respect to regulation, inhibited by sulfite, metabisulfite and dithonite. Functionally, TQO plays a role in sulfur oxidation and is proposed to couple sulfur oxidation to dioxygen reduction; caldariellaquinone or sulfolobus quinone seem to serve to transfer electrons to the electron transport chain terminal oxidase formed by DoxBCE. The sequence is that of Thiosulfate dehydrogenase [quinone] small subunit (doxA) from Acidianus ambivalens (Desulfurolobus ambivalens).